The primary structure comprises 310 residues: tRNA dimethylallyltransferase (310 aa).

Position 24 to 31 (24 to 31 (GPTASGKT)) interacts with ATP. 26-31 (TASGKT) lines the substrate pocket. The tract at residues 49 to 52 (DSRQ) is interaction with substrate tRNA.

This sequence belongs to the IPP transferase family. In terms of assembly, monomer. Requires Mg(2+) as cofactor.

The enzyme catalyses adenosine(37) in tRNA + dimethylallyl diphosphate = N(6)-dimethylallyladenosine(37) in tRNA + diphosphate. Its function is as follows. Catalyzes the transfer of a dimethylallyl group onto the adenine at position 37 in tRNAs that read codons beginning with uridine, leading to the formation of N6-(dimethylallyl)adenosine (i(6)A). The polypeptide is tRNA dimethylallyltransferase (Synechococcus sp. (strain CC9311)).